The chain runs to 260 residues: Acyl-[acyl-carrier-protein]--UDP-N-acetylglucosamine O-acyltransferase (260 aa).

It belongs to the transferase hexapeptide repeat family. LpxA subfamily. As to quaternary structure, homotrimer.

The protein resides in the cytoplasm. It catalyses the reaction a (3R)-hydroxyacyl-[ACP] + UDP-N-acetyl-alpha-D-glucosamine = a UDP-3-O-[(3R)-3-hydroxyacyl]-N-acetyl-alpha-D-glucosamine + holo-[ACP]. Its pathway is glycolipid biosynthesis; lipid IV(A) biosynthesis; lipid IV(A) from (3R)-3-hydroxytetradecanoyl-[acyl-carrier-protein] and UDP-N-acetyl-alpha-D-glucosamine: step 1/6. Its function is as follows. Involved in the biosynthesis of lipid A, a phosphorylated glycolipid that anchors the lipopolysaccharide to the outer membrane of the cell. This is Acyl-[acyl-carrier-protein]--UDP-N-acetylglucosamine O-acyltransferase from Sulfurovum sp. (strain NBC37-1).